Consider the following 89-residue polypeptide: Small ribosomal subunit protein uS15 (89 aa).

The protein belongs to the universal ribosomal protein uS15 family. Part of the 30S ribosomal subunit. Forms a bridge to the 50S subunit in the 70S ribosome, contacting the 23S rRNA.

In terms of biological role, one of the primary rRNA binding proteins, it binds directly to 16S rRNA where it helps nucleate assembly of the platform of the 30S subunit by binding and bridging several RNA helices of the 16S rRNA. Forms an intersubunit bridge (bridge B4) with the 23S rRNA of the 50S subunit in the ribosome. The chain is Small ribosomal subunit protein uS15 from Pseudomonas aeruginosa (strain LESB58).